A 522-amino-acid chain; its full sequence is Cytochrome bd-I ubiquinol oxidase subunit 1 (522 aa).

Met-1 carries the N-formylmethionine modification. Topologically, residues 1–22 (MLDIVELSRLQFALTAMYHFLF) are cytoplasmic. His-19 contributes to the heme b binding site. A helical membrane pass occupies residues 23–42 (VPLTLGMAFLLAIMETVYVL). Topologically, residues 43–94 (SGKQIYKDMTKFWGKLFGINFALGVATGLTMEFQFGTNWSYYSHYVGDIFGA) are periplasmic. Residues 95–114 (PLAIEGLMAFFLESTFVGLF) form a helical membrane-spanning segment. Residues 115-129 (FFGWDRLGKVQHMCV) are Cytoplasmic-facing. A helical membrane pass occupies residues 130–149 (TWLVALGSNLSALWILVANG). The Periplasmic segment spans residues 150 to 187 (WMQNPIASDFNFETMRMEMVSFSELVLNPVAQVKFVHT). Position 186 (His-186) interacts with heme b. Residues 188 to 207 (VASGYVTGAMFILGISAWYM) traverse the membrane as a helical segment. The Cytoplasmic portion of the chain corresponds to 208–219 (LKGRDFAFAKRS). The helical transmembrane segment at 220-239 (FAIAASFGMAAVLSVIVLGD) threads the bilayer. The Periplasmic segment spans residues 240–392 (ESGYEMGDVQ…VAPLYFAFRI (153 aa)). Met-393 is a heme b binding site. The helical transmembrane segment at 393–412 (MVACGFLLLAIIALSFWSVI) threads the bilayer. The Cytoplasmic segment spans residues 413 to 470 (RNRIGEKKWLLRAALYGIPLPWIAVEAGWFVAEYGRQPWAIGEVLPTAVANSSLTAGD). Residues 471–490 (LIFSMVLICGLYTLFLVAEL) form a helical membrane-spanning segment. Topologically, residues 491-522 (FLMFKFARLGPSSLKTGRYHFEQSSTTTQPAR) are periplasmic.

It belongs to the cytochrome ubiquinol oxidase subunit 1 family. As to quaternary structure, heterodimer of subunits I and II. Requires heme b as cofactor. Heme d cis-diol is required as a cofactor.

The protein localises to the cell inner membrane. It catalyses the reaction 2 a ubiquinol + O2(in) + 4 H(+)(in) = 2 a ubiquinone + 2 H2O(in) + 4 H(+)(out). It participates in energy metabolism; oxidative phosphorylation. Its function is as follows. A terminal oxidase that produces a proton motive force by the vectorial transfer of protons across the inner membrane. It is the component of the aerobic respiratory chain of E.coli that predominates when cells are grown at low aeration. Generates a proton motive force using protons and electrons from opposite sides of the membrane to generate H(2)O, transferring 1 proton/electron. The sequence is that of Cytochrome bd-I ubiquinol oxidase subunit 1 (cydA) from Escherichia coli O6:H1 (strain CFT073 / ATCC 700928 / UPEC).